Reading from the N-terminus, the 1391-residue chain is DNA-directed RNA polymerase subunit beta'' (1391 aa).

Zn(2+) contacts are provided by Cys-220, Cys-291, Cys-298, and Cys-301.

The protein belongs to the RNA polymerase beta' chain family. RpoC2 subfamily. In terms of assembly, in plastids the minimal PEP RNA polymerase catalytic core is composed of four subunits: alpha, beta, beta', and beta''. When a (nuclear-encoded) sigma factor is associated with the core the holoenzyme is formed, which can initiate transcription. Zn(2+) serves as cofactor.

The protein resides in the plastid. Its subcellular location is the chloroplast. The catalysed reaction is RNA(n) + a ribonucleoside 5'-triphosphate = RNA(n+1) + diphosphate. Functionally, DNA-dependent RNA polymerase catalyzes the transcription of DNA into RNA using the four ribonucleoside triphosphates as substrates. This Gossypium barbadense (Sea Island cotton) protein is DNA-directed RNA polymerase subunit beta''.